Here is a 467-residue protein sequence, read N- to C-terminus: Interleukin-6 receptor subunit alpha (467 aa).

The signal sequence occupies residues 1 to 19; the sequence is MLAVGCALLTALLAAPGMA. The Ig-like C2-type domain occupies 20-112; it reads LAPRGCSKLE…AGSVRLLVDA (93 aa). The Extracellular segment spans residues 20-365; it reads LAPRGCSKLE…VQDSASVPLP (346 aa). 4 cysteine pairs are disulfide-bonded: cysteine 25–cysteine 193, cysteine 47–cysteine 96, cysteine 121–cysteine 132, and cysteine 165–cysteine 176. N-linked (GlcNAc...) asparagine glycosylation is found at asparagine 55 and asparagine 93. Fibronectin type-III domains are found at residues 113–217 and 218–316; these read PPEE…LQPD and PPVN…IPWT. N-linked (GlcNAc...) asparagine glycosylation is found at asparagine 221 and asparagine 245. Residues 303–307 carry the WSXWS motif motif; the sequence is WSEWS. Residues 315–357 are disordered; sequence WTESRSSPAETELPLSTQAPTTNEDDEDISSKESANATSLPVQ. 2 stretches are compositionally biased toward polar residues: residues 317–336 and 346–357; these read ESRS…APTT and KESANATSLPVQ. N-linked (GlcNAc...) asparagine glycosylation occurs at asparagine 350. An O-linked (GlcNAc) threonine glycan is attached at threonine 352. Residues 366-386 form a helical membrane-spanning segment; the sequence is TFLVAGGSLAFGTLLCIGIIL. Topologically, residues 387 to 467 are cytoplasmic; the sequence is RFKKTGQLQA…VSNRDYFFPR (81 aa). The disordered stretch occupies residues 428–467; sequence ISPPVSPNSLGDNTSRNSRPEARGPQSPYDVSNRDYFFPR.

Belongs to the type I cytokine receptor family. Type 3 subfamily. In terms of assembly, component of a hexamer of two molecules each of IL6, IL6R and IL6ST; first binds to IL6 to associate with the signaling subunit IL6ST. Interacts (via N-terminal ectodomain) with SORL1; this interaction may affect IL6-binding to IL6R, hence decrease IL6 'classic-signaling'. As to quaternary structure, also interacts with SORL1; this interaction leads to soluble IL6R internalization. May form a trimeric complex with the soluble SORL1 ectodomain and circulating IL6 receptor; this interaction might stabilize circulating IL6, hence promote IL6 'trans-signaling'. In terms of processing, a short soluble form is also released from the membrane by proteolysis. The sIL6R is formed by limited proteolysis of membrane-bound receptors, a process referred to as ectodomain shedding. mIL6R is cleaved by the proteases ADAM10 and ADAM17. Glycosylated. Glycosylation is dispensable for transport, signaling, and cell-surface turnover. Glycosylation at Asn-55 is a protease-regulatory exosite. Glycosylation is required for ADAM17-mediated proteolysis. In terms of tissue distribution, expressed in liver.

The protein resides in the cell membrane. Its subcellular location is the secreted. Its activity is regulated as follows. Classic and trans-signaling are both inhibited by tocilizumab, a humanized monoclonal antibody that blocks interleukin IL6R signaling. In terms of biological role, part of the receptor for interleukin 6. Binds to IL6 with low affinity, but does not transduce a signal. Signal activation necessitate an association with IL6ST. Activation leads to the regulation of the immune response, acute-phase reactions and hematopoiesis. The interaction with membrane-bound IL6R and IL6ST stimulates 'classic signaling', the restricted expression of the IL6R limits classic IL6 signaling to only a few tissues such as the liver and some cells of the immune system. Whereas the binding of IL6 and soluble IL6R to IL6ST stimulates 'trans-signaling'. Alternatively, 'cluster signaling' occurs when membrane-bound IL6:IL6R complexes on transmitter cells activate IL6ST receptors on neighboring receiver cells. Signaling via the membrane-bound IL6R is mostly regenerative and anti-inflammatory. Drives naive CD4(+) T cells to the Th17 lineage, through 'cluster signaling' by dendritic cells. Functionally, soluble form of IL6 receptor (sIL6R) that acts as an agonist of IL6 activity. The IL6:sIL6R complex (hyper-IL6) binds to IL6ST/gp130 on cell surfaces and induces signaling also on cells that do not express membrane-bound IL6R in a process called IL6 'trans-signaling'. sIL6R is causative for the pro-inflammatory properties of IL6 and an important player in the development of chronic inflammatory diseases. In complex with IL6, is required for induction of VEGF production. Plays a protective role during liver injury, being required for maintenance of tissue regeneration. 'Trans-signaling' in central nervous system regulates energy and glucose homeostasis. The polypeptide is Interleukin-6 receptor subunit alpha (IL6R) (Sus scrofa (Pig)).